A 258-amino-acid polypeptide reads, in one-letter code: Glucanase inhibitor protein 3 (258 aa).

An N-terminal signal peptide occupies residues 1–19; it reads MKIISAVAASSIALGAVSA. Positions 29–256 constitute a Peptidase S1 domain; it reads VLGGAVVPSG…ALEWINSITK (228 aa). Cysteines 56 and 72 form a disulfide. Residues Asn90, Asn105, and Asn110 are each glycosylated (N-linked (GlcNAc...) asparagine). Cystine bridges form between Cys180-Cys192 and Cys202-Cys233.

It belongs to the peptidase S1 family. As to quaternary structure, forms an apoplastic complex with host endoglucanases in tomato leaves during P.infestans infection.

The protein localises to the secreted. Functionally, secreted effector that suppresses host plant glucan elicitor-mediated defense responses. Targets host endoglucanases and inhibits the endoglucanase-mediated release of elicitor-active glucan oligosaccharides from P.infestans cell walls. This Phytophthora infestans (Potato late blight agent) protein is Glucanase inhibitor protein 3.